The following is a 274-amino-acid chain: 2,3,4,5-tetrahydropyridine-2,6-dicarboxylate N-succinyltransferase (274 aa).

The protein belongs to the transferase hexapeptide repeat family.

Its subcellular location is the cytoplasm. The enzyme catalyses (S)-2,3,4,5-tetrahydrodipicolinate + succinyl-CoA + H2O = (S)-2-succinylamino-6-oxoheptanedioate + CoA. Its pathway is amino-acid biosynthesis; L-lysine biosynthesis via DAP pathway; LL-2,6-diaminopimelate from (S)-tetrahydrodipicolinate (succinylase route): step 1/3. The chain is 2,3,4,5-tetrahydropyridine-2,6-dicarboxylate N-succinyltransferase from Delftia acidovorans (strain DSM 14801 / SPH-1).